We begin with the raw amino-acid sequence, 584 residues long: 2-succinyl-5-enolpyruvyl-6-hydroxy-3-cyclohexene-1-carboxylate synthase (584 aa).

Belongs to the TPP enzyme family. MenD subfamily. Homodimer. Mg(2+) is required as a cofactor. Mn(2+) serves as cofactor. The cofactor is thiamine diphosphate.

The enzyme catalyses isochorismate + 2-oxoglutarate + H(+) = 5-enolpyruvoyl-6-hydroxy-2-succinyl-cyclohex-3-ene-1-carboxylate + CO2. It functions in the pathway quinol/quinone metabolism; 1,4-dihydroxy-2-naphthoate biosynthesis; 1,4-dihydroxy-2-naphthoate from chorismate: step 2/7. Its pathway is quinol/quinone metabolism; menaquinone biosynthesis. Functionally, catalyzes the thiamine diphosphate-dependent decarboxylation of 2-oxoglutarate and the subsequent addition of the resulting succinic semialdehyde-thiamine pyrophosphate anion to isochorismate to yield 2-succinyl-5-enolpyruvyl-6-hydroxy-3-cyclohexene-1-carboxylate (SEPHCHC). In Bacillus cereus (strain ATCC 14579 / DSM 31 / CCUG 7414 / JCM 2152 / NBRC 15305 / NCIMB 9373 / NCTC 2599 / NRRL B-3711), this protein is 2-succinyl-5-enolpyruvyl-6-hydroxy-3-cyclohexene-1-carboxylate synthase.